Here is a 150-residue protein sequence, read N- to C-terminus: UPF0098 protein CPn_0877/CP_0992/CPj0877/CpB0906 (150 aa).

Belongs to the UPF0098 family.

This Chlamydia pneumoniae (Chlamydophila pneumoniae) protein is UPF0098 protein CPn_0877/CP_0992/CPj0877/CpB0906.